The sequence spans 417 residues: Serine hydroxymethyltransferase (417 aa).

(6S)-5,6,7,8-tetrahydrofolate is bound by residues Leu121 and 125–127 (GHL). Lys229 carries the post-translational modification N6-(pyridoxal phosphate)lysine. Residue 355-357 (SPF) coordinates (6S)-5,6,7,8-tetrahydrofolate.

Belongs to the SHMT family. In terms of assembly, homodimer. It depends on pyridoxal 5'-phosphate as a cofactor.

It localises to the cytoplasm. It catalyses the reaction (6R)-5,10-methylene-5,6,7,8-tetrahydrofolate + glycine + H2O = (6S)-5,6,7,8-tetrahydrofolate + L-serine. Its pathway is one-carbon metabolism; tetrahydrofolate interconversion. It participates in amino-acid biosynthesis; glycine biosynthesis; glycine from L-serine: step 1/1. In terms of biological role, catalyzes the reversible interconversion of serine and glycine with tetrahydrofolate (THF) serving as the one-carbon carrier. This reaction serves as the major source of one-carbon groups required for the biosynthesis of purines, thymidylate, methionine, and other important biomolecules. Also exhibits THF-independent aldolase activity toward beta-hydroxyamino acids, producing glycine and aldehydes, via a retro-aldol mechanism. This Shewanella baltica (strain OS155 / ATCC BAA-1091) protein is Serine hydroxymethyltransferase.